Consider the following 402-residue polypeptide: Imidazolonepropionase (402 aa).

The Fe(3+) site is built by His66 and His68. Residues His66 and His68 each coordinate Zn(2+). Positions 75, 138, and 171 each coordinate 4-imidazolone-5-propanoate. Tyr138 lines the N-formimidoyl-L-glutamate pocket. His236 contacts Fe(3+). His236 is a binding site for Zn(2+). 4-imidazolone-5-propanoate is bound at residue Gln239. Fe(3+) is bound at residue Asp311. Zn(2+) is bound at residue Asp311. The N-formimidoyl-L-glutamate site is built by Asn313 and Gly315. Thr316 is a binding site for 4-imidazolone-5-propanoate.

This sequence belongs to the metallo-dependent hydrolases superfamily. HutI family. Requires Zn(2+) as cofactor. Fe(3+) serves as cofactor.

It localises to the cytoplasm. The catalysed reaction is 4-imidazolone-5-propanoate + H2O = N-formimidoyl-L-glutamate. It participates in amino-acid degradation; L-histidine degradation into L-glutamate; N-formimidoyl-L-glutamate from L-histidine: step 3/3. In terms of biological role, catalyzes the hydrolytic cleavage of the carbon-nitrogen bond in imidazolone-5-propanoate to yield N-formimidoyl-L-glutamate. It is the third step in the universal histidine degradation pathway. In Pseudomonas aeruginosa (strain LESB58), this protein is Imidazolonepropionase.